A 71-amino-acid chain; its full sequence is Small ribosomal subunit protein bS21 (71 aa).

The segment at 47 to 71 (RENATRAKRHAKRVARENARNTRLY) is disordered. A compositionally biased stretch (basic and acidic residues) spans 60–71 (VARENARNTRLY).

Belongs to the bacterial ribosomal protein bS21 family.

This Actinobacillus succinogenes (strain ATCC 55618 / DSM 22257 / CCUG 43843 / 130Z) protein is Small ribosomal subunit protein bS21.